The primary structure comprises 112 residues: Small ribosomal subunit protein bS16 (112 aa).

This sequence belongs to the bacterial ribosomal protein bS16 family.

The protein is Small ribosomal subunit protein bS16 of Karelsulcia muelleri (strain GWSS) (Sulcia muelleri).